The sequence spans 169 residues: Ribosome maturation factor RimM (169 aa).

The PRC barrel domain maps to 97-169; it reads EDEYYWTDLV…TITADWGLDY (73 aa).

Belongs to the RimM family. As to quaternary structure, binds ribosomal protein uS19.

Its subcellular location is the cytoplasm. An accessory protein needed during the final step in the assembly of 30S ribosomal subunit, possibly for assembly of the head region. Essential for efficient processing of 16S rRNA. May be needed both before and after RbfA during the maturation of 16S rRNA. It has affinity for free ribosomal 30S subunits but not for 70S ribosomes. In Neisseria meningitidis serogroup B (strain ATCC BAA-335 / MC58), this protein is Ribosome maturation factor RimM.